We begin with the raw amino-acid sequence, 520 residues long: MSLKEEVESRKTFAIISHPDAGKTTLTEKLLYFSGAIREAGTVKGKKTGKFATSDWMKVEQERGISVTSSVMQFDYDDYKINILDTPGHEDFSEDTYRTLMAVDSAVMVIDCAKGIEPQTLKLFKVCRMRGIPIFTFINKLDRVGKEPFELLDEIEETLNIDTYPMNWPIGMGQNFFGIIDRDSKSIEPFRDEENVLHLNDDYELQEEHAIRNDSAFAQAIEEFMLVKEAGEEFDNDALLNGELTPVFFGSALANFGVQNFLNAYVDHAPMPNARQTNEEVEVSPFDDEFSGFIFKIQANMDPKHRDRIAFMRVVSGAFERGMDVTLQRTSKKQKITRSTSFMADDKETVNHAVAGDIIGLYDTGNYQIGDTLVGGKQKYSFQDLPQFTPEIFMKVSAKNVMKQKHFHKGIEQLVQEGAIQYYKTLHTNQIILGAVGQLQFEVFEHRMKNEYNVDVVMEPVGRKIARWIENEDDIQDKMNTSRSILVKDRYDNFVFLFENEFATRWFEEKFPEIKLYSLL.

One can recognise a tr-type G domain in the interval 8-277; sequence ESRKTFAIIS…HAPMPNARQT (270 aa). GTP is bound by residues 17-24, 85-89, and 139-142; these read SHPDAGKT, DTPGH, and NKLD.

It belongs to the TRAFAC class translation factor GTPase superfamily. Classic translation factor GTPase family. PrfC subfamily.

The protein resides in the cytoplasm. Functionally, increases the formation of ribosomal termination complexes and stimulates activities of RF-1 and RF-2. It binds guanine nucleotides and has strong preference for UGA stop codons. It may interact directly with the ribosome. The stimulation of RF-1 and RF-2 is significantly reduced by GTP and GDP, but not by GMP. This is Peptide chain release factor 3 from Staphylococcus haemolyticus (strain JCSC1435).